We begin with the raw amino-acid sequence, 2171 residues long: ATP-binding cassette sub-family C member Sur (2171 aa).

Residues 1 to 36 (MKQLFNIIHCDHLNGHVRSIYDNLNTDICGIDRVRR) are Extracellular-facing. A helical membrane pass occupies residues 37–57 (VFTFFSIFLLLFGLMFVCSRY). The Cytoplasmic portion of the chain corresponds to 58–71 (KKCHKTLLTFHNGR). The chain crosses the membrane as a helical span at residues 72 to 92 (AAISLLLLALNSFDLARIFLP). Residues 93 to 112 (HQNVRNLNRLFQSSPRDLNY) are Extracellular-facing. Residues 113–133 (LVVIGSGELWNALFSTLLTLM) form a helical membrane-spanning segment. The Cytoplasmic segment spans residues 134–145 (LMLYHRMVERKK). A helical transmembrane segment spans residues 146-166 (ATVFLYASTAVEALTFALLSN). Residues 167 to 182 (ELFELVRYEDFLELQT) lie on the Extracellular side of the membrane. The chain crosses the membrane as a helical span at residues 183 to 203 (CLVAMSAMCMVSLAMLDGLTV). Over 204-224 (YKECYHDDYLDDYGKIGYKHS) the chain is Cytoplasmic. The helical transmembrane segment at 225-245 (MATFYSKSCFWWLTPLLWLGY) threads the bilayer. Over 246–299 (KEPLELEDLGQMKLEDSARSHYDHFLYIYTEKKKKSNSSPSLWYCYIKNSWQMF) the chain is Extracellular. The helical transmembrane segment at 300–320 (ALGGILKLAGDLFALIGPLAI) threads the bilayer. Residues 321 to 447 (QKIVEYIEQL…MTEDTRNIME (127 aa)) are Cytoplasmic-facing. The ABC transmembrane type-1 1 domain occupies 344–622 (NEVANVLLST…FPITVPIIIA (279 aa)). The segment at 388-434 (DSSDSAGQVQSTSSTSDEKQKNDDSMATPEHVDNPSEPNISHDIGSI) is disordered. Over residues 389–402 (SSDSAGQVQSTSST) the composition is skewed to polar residues. Over residues 403–421 (SDEKQKNDDSMATPEHVDN) the composition is skewed to basic and acidic residues. The helical transmembrane segment at 448–468 (FFLIIHYAWAIPFKIAVVIYL) threads the bilayer. Topologically, residues 469–474 (LYMNLG) are extracellular. Residues 475-495 (ISAVIGSIACIVIMTPLQFFI) traverse the membrane as a helical segment. Residues 496–562 (GNAMSKNAEV…KDATFWTLMA (67 aa)) lie on the Cytoplasmic side of the membrane. A helical membrane pass occupies residues 563–583 (VLTHIATVLITFVTLGVYVWL). Residues 584–600 (HRDQEFDLNASRLFSSL) are Extracellular-facing. A helical transmembrane segment spans residues 601 to 621 (ALFQQLTVPLLIFPITVPIII). The Cytoplasmic segment spans residues 622-1409 (AARVSTRRLE…KYGKISDDIY (788 aa)). The region spanning 785–1014 (VSINDGLFTW…QPRITAEWNA (230 aa)) is the ABC transporter 1 domain. Residue 822-829 (GKNGSGKT) coordinates ATP. Residues 1141–1151 (RRRHTLGRRGS) show a composition bias toward basic residues. 2 disordered regions span residues 1141-1177 (RRRH…SISG) and 1209-1265 (PRVQ…DHVR). Positions 1160–1176 (LSGLSTLTATSESSSIS) are enriched in low complexity. A compositionally biased stretch (polar residues) spans 1212-1232 (QSWQPPQHVTHHQPLSRNASS). Over residues 1242–1251 (DVKKSEEARR) the composition is skewed to basic and acidic residues. The helical transmembrane segment at 1410–1430 (LMYIRAAGLPIITIFFITALI) threads the bilayer. Residues 1421–1715 (ITIFFITALI…AVTKSPSELR (295 aa)) enclose the ABC transmembrane type-1 2 domain. Topologically, residues 1431–1468 (WQCLRVYTDIWLQQWSNVHGRVASKGHVVLHPSEQDHE) are extracellular. Residues 1469–1489 (VTYYFRMYAAISCVCIIMALV) form a helical membrane-spanning segment. Topologically, residues 1490–1558 (STPAGQYAGC…QRLLQFTLLC (69 aa)) are cytoplasmic. Residues 1559 to 1579 (LSAILINVTITPWILVLTLPI) form a helical membrane-spanning segment. The Extracellular portion of the chain corresponds to 1580–1655 (CGAYYLIQKF…YALLNTSHRW (76 aa)). A helical transmembrane segment spans residues 1656–1676 (LGVSLDYLGGCIVFVATVTAL). The Cytoplasmic portion of the chain corresponds to 1677–1718 (TAASVSCRRHYEATTSPSASASPSPFETYAVTKSPSELRPSP). A helical transmembrane segment spans residues 1719–1739 (SLVGLAINYTLLVPIYLNWVV). Residues 1740–2171 (KLLADMEMYA…GLLEKGASKW (432 aa)) lie on the Extracellular side of the membrane. Residues 1766–1778 (ADADADADADVDA) show a composition bias toward acidic residues. Disordered regions lie at residues 1766 to 1844 (ADAD…GHEN) and 1866 to 1902 (NFHH…DKDK). 2 stretches are compositionally biased toward basic and acidic residues: residues 1793–1804 (EVDRSSQSDAGD) and 1887–1902 (VIKD…DKDK). Residues 1930-2165 (IHFDNVSLRY…EGSVFRGLLE (236 aa)) enclose the ABC transporter 2 domain. Residue 1964 to 1971 (GRTGSGKS) participates in ATP binding.

It belongs to the ABC transporter superfamily. ABCC family. Conjugate transporter (TC 3.A.1.208) subfamily. In terms of tissue distribution, highly expressed in adult heart. Detected at lower levels in head and abdomen.

Its subcellular location is the membrane. May function as regulatory subunit of ATP-sensitive potassium channels (KATP) and form KATP channels with a member of the ATP-sensitive inward rectifier potassium channel family. May also have channel activity by itself (in vitro). May protect the heart during hypoxia. May protect against heart failure under conditions of tachycardic stress. This is ATP-binding cassette sub-family C member Sur (Sur) from Drosophila melanogaster (Fruit fly).